The following is a 426-amino-acid chain: Elongation factor 1-alpha (426 aa).

In terms of domain architecture, tr-type G spans 5–221 (KPHINLAVIG…NALKEPEKPT (217 aa)). Residues 14–21 (GHIDHGKS) are G1. Residue 14-21 (GHIDHGKS) coordinates GTP. Ser21 contributes to the Mg(2+) binding site. A G2 region spans residues 70-74 (GITID). The interval 91-94 (DCPG) is G3. GTP is bound by residues 91–95 (DCPGH) and 146–149 (NKMD). The G4 stretch occupies residues 146–149 (NKMD). The G5 stretch occupies residues 185-187 (SAF).

It belongs to the TRAFAC class translation factor GTPase superfamily. Classic translation factor GTPase family. EF-Tu/EF-1A subfamily.

It localises to the cytoplasm. It catalyses the reaction GTP + H2O = GDP + phosphate + H(+). GTP hydrolase that promotes the GTP-dependent binding of aminoacyl-tRNA to the A-site of ribosomes during protein biosynthesis. The protein is Elongation factor 1-alpha of Methanocella arvoryzae (strain DSM 22066 / NBRC 105507 / MRE50).